Reading from the N-terminus, the 209-residue chain is Large ribosomal subunit protein uL3 (209 aa).

The segment at 133–153 (THGNSLSHRVPGSIGQNQTPG) is disordered. Glutamine 150 is modified (N5-methylglutamine).

It belongs to the universal ribosomal protein uL3 family. As to quaternary structure, part of the 50S ribosomal subunit. Forms a cluster with proteins L14 and L19. Post-translationally, methylated by PrmB.

In terms of biological role, one of the primary rRNA binding proteins, it binds directly near the 3'-end of the 23S rRNA, where it nucleates assembly of the 50S subunit. The chain is Large ribosomal subunit protein uL3 from Serratia proteamaculans (strain 568).